The sequence spans 533 residues: Protein mono-ADP-ribosyltransferase PARP3 (533 aa).

A disordered region spans residues 1-30 (MAPKPKPWVQTEGPEKKKGRQAGREEDPFR). Lys-6 carries the N6-(ADP-ribosyl)lysine modification. An ADP-ribosyl glutamic acid mark is found at Glu-12, Glu-15, Glu-26, and Glu-34. The Nuclear localization signal signature appears at 14-20 (PEKKKGR). The residue at position 37 (Lys-37) is an N6-(ADP-ribosyl)lysine. The WGR domain occupies 59–150 (GTQVYEDYNC…DHFVSHPGKY (92 aa)). Asp-141 is subject to ADP-ribosyl aspartic acid. Glu-163 carries the post-translational modification ADP-ribosyl glutamic acid. The region spanning 182-300 (PCSLDPATQK…DIELAQALQA (119 aa)) is the PARP alpha-helical domain. The residue at position 210 (Asp-210) is an ADP-ribosyl aspartic acid. ADP-ribosyl glutamic acid occurs at positions 231, 309, 310, 344, and 449. One can recognise a PARP catalytic domain in the interval 313–533 (HPLDRDYQLL…RLRYLLEVHL (221 aa)). Residues 454–482 (TDNPSLKSPPPGFDSVIARGHTEPDPTQD) form a disordered region.

Belongs to the ARTD/PARP family. Interacts with PARP1; leading to activate PARP1 in absence of DNA. Interacts with PRKDC. Interacts with XRCC5/Ku80; the interaction is dependent on nucleic acids. Interacts with XRCC6/Ku70; the interaction is dependent on nucleic acids. Interacts with EZH2, HDAC1, HDAC2, SUZ12, YY1, LRIG3 and LIG4. Post-translationally, auto-mono-ADP-ribosylated. Widely expressed; the highest levels are in the kidney, skeletal muscle, liver, heart and spleen; also detected in pancreas, lung, placenta, brain, leukocytes, colon, small intestine, ovary, testis, prostate and thymus.

The protein localises to the nucleus. Its subcellular location is the chromosome. It is found in the cytoplasm. It localises to the cytoskeleton. The protein resides in the microtubule organizing center. The protein localises to the centrosome. Its subcellular location is the centriole. The enzyme catalyses L-aspartyl-[protein] + NAD(+) = 4-O-(ADP-D-ribosyl)-L-aspartyl-[protein] + nicotinamide. The catalysed reaction is L-glutamyl-[protein] + NAD(+) = 5-O-(ADP-D-ribosyl)-L-glutamyl-[protein] + nicotinamide. It catalyses the reaction L-lysyl-[protein] + NAD(+) = N(6)-(ADP-D-ribosyl)-L-lysyl-[protein] + nicotinamide + H(+). With respect to regulation, mono-ADP-ribosyltransferase activity of PARP3 is selectively inhibited by ME0328 compound; ME0328 does not inhibit other ARTD/PARP enzymes, such as PARP1. Mono-ADP-ribosyltransferase is strongly inhibited by KU0058948 compound. Its function is as follows. Mono-ADP-ribosyltransferase that mediates mono-ADP-ribosylation of target proteins and plays a key role in the response to DNA damage. Mediates mono-ADP-ribosylation of glutamate, aspartate or lysine residues on target proteins. In contrast to PARP1 and PARP2, it is not able to mediate poly-ADP-ribosylation. Involved in DNA repair by mediating mono-ADP-ribosylation of a limited number of acceptor proteins involved in chromatin architecture and in DNA metabolism, such as histone H2B, XRCC5 and XRCC6. ADP-ribosylation follows DNA damage and appears as an obligatory step in a detection/signaling pathway leading to the reparation of DNA strand breaks. Involved in single-strand break repair by catalyzing mono-ADP-ribosylation of histone H2B on 'Glu-2' (H2BE2ADPr) of nucleosomes containing nicked DNA. Cooperates with the XRCC5-XRCC6 (Ku80-Ku70) heterodimer to limit end-resection thereby promoting accurate NHEJ. Suppresses G-quadruplex (G4) structures in response to DNA damage. Associates with a number of DNA repair factors and is involved in the response to exogenous and endogenous DNA strand breaks. Together with APLF, promotes the retention of the LIG4-XRCC4 complex on chromatin and accelerate DNA ligation during non-homologous end-joining (NHEJ). May link the DNA damage surveillance network to the mitotic fidelity checkpoint. Acts as a negative regulator of immunoglobulin class switch recombination, probably by controlling the level of AICDA /AID on the chromatin. In addition to proteins, also able to ADP-ribosylate DNA: mediates DNA mono-ADP-ribosylation of DNA strand break termini via covalent addition of a single ADP-ribose moiety to a 5'- or 3'-terminal phosphate residues in DNA containing multiple strand breaks. This is Protein mono-ADP-ribosyltransferase PARP3 from Homo sapiens (Human).